Reading from the N-terminus, the 92-residue chain is C-C motif chemokine 3 (92 aa).

The N-terminal stretch at 1–23 (MQVSTAALAVLLCTMALCNQFSA) is a signal peptide. 2 disulfide bridges follow: cysteine 33–cysteine 57 and cysteine 34–cysteine 73.

It belongs to the intercrine beta (chemokine CC) family. In terms of assembly, self-associates. Also heterodimer of MIP-1-alpha(4-69) and MIP-1-beta(3-69). Interacts with CCR1.

The protein localises to the secreted. Its function is as follows. Monokine with inflammatory and chemokinetic properties. Binds to CCR1, CCR4 and CCR5. One of the major HIV-suppressive factors produced by CD8+ T-cells. Recombinant MIP-1-alpha induces a dose-dependent inhibition of different strains of HIV-1, HIV-2, and simian immunodeficiency virus (SIV). In Pan troglodytes (Chimpanzee), this protein is C-C motif chemokine 3 (CCL3).